The primary structure comprises 338 residues: Glycerol-3-phosphate dehydrogenase [NAD(P)+] (338 aa).

NADPH-binding residues include serine 13, tryptophan 14, and lysine 108. Sn-glycerol 3-phosphate is bound by residues lysine 108, glycine 139, and serine 141. Position 143 (alanine 143) interacts with NADPH. Residues lysine 194, aspartate 247, serine 257, arginine 258, and asparagine 259 each contribute to the sn-glycerol 3-phosphate site. Lysine 194 serves as the catalytic Proton acceptor. Arginine 258 lines the NADPH pocket. Residues valine 282 and glutamate 284 each contribute to the NADPH site.

It belongs to the NAD-dependent glycerol-3-phosphate dehydrogenase family.

Its subcellular location is the cytoplasm. It catalyses the reaction sn-glycerol 3-phosphate + NAD(+) = dihydroxyacetone phosphate + NADH + H(+). The catalysed reaction is sn-glycerol 3-phosphate + NADP(+) = dihydroxyacetone phosphate + NADPH + H(+). The protein operates within membrane lipid metabolism; glycerophospholipid metabolism. Catalyzes the reduction of the glycolytic intermediate dihydroxyacetone phosphate (DHAP) to sn-glycerol 3-phosphate (G3P), the key precursor for phospholipid synthesis. The protein is Glycerol-3-phosphate dehydrogenase [NAD(P)+] of Streptococcus agalactiae serotype III (strain NEM316).